Consider the following 380-residue polypeptide: Cystathionine gamma-synthase (380 aa).

Position 195 is an N6-(pyridoxal phosphate)lysine (Lys-195).

Belongs to the trans-sulfuration enzymes family. Homotetramer. The cofactor is pyridoxal 5'-phosphate.

Its subcellular location is the cytoplasm. It carries out the reaction O-succinyl-L-homoserine + L-cysteine = L,L-cystathionine + succinate + H(+). It participates in amino-acid biosynthesis; L-methionine biosynthesis via de novo pathway; L-cystathionine from O-succinyl-L-homoserine: step 1/1. With respect to regulation, four natural products, alpha-lapachone, 9-hydroxy-alpha-lapachone, Paulownin, and Yangambin, show strong inhibitory activities against CGS. All these four inhibitors prevent the binding of OSHS to CGS in a non-competitive fashion. These compounds are specific inhibitors against CGS from H.pylori relative to E.coli since they exhibit very low inhibition activities against CGS from E.coli. Its function is as follows. Catalyzes the formation of L-cystathionine from O-succinyl-L-homoserine (OSHS) and L-cysteine, via a gamma-replacement reaction. In the absence of thiol, catalyzes gamma-elimination to form 2-oxobutanoate, succinate and ammonia. The sequence is that of Cystathionine gamma-synthase (metB) from Helicobacter pylori (Campylobacter pylori).